The sequence spans 125 residues: uncharacterized protein (125 aa).

The helical transmembrane segment at 100-120 (YFKVAFALAVLTPLAIWIFYI) threads the bilayer.

Its subcellular location is the membrane. This is an uncharacterized protein from Saccharomyces cerevisiae (strain ATCC 204508 / S288c) (Baker's yeast).